The primary structure comprises 551 residues: Glucan 1,4-alpha-maltotetraohydrolase (551 aa).

A signal peptide spans 1–21 (MSHILRAAVLAAVLLPFPALA). Positions 22, 23, 34, 37, and 38 each coordinate Ca(2+). A substrate-binding site is contributed by 99–100 (YF). Position 137 (N137) interacts with Ca(2+). H138 is a substrate binding site. C161 and C171 form a disulfide bridge. Ca(2+)-binding residues include D172 and D175. A substrate-binding site is contributed by 177 to 181 (FIGGE). D183 provides a ligand contact to Ca(2+). R212 provides a ligand contact to substrate. D214 acts as the Nucleophile in catalysis. Residue G218 coordinates Ca(2+). An intrachain disulfide couples C237 to C272. The active-site Proton donor is E240. Substrate contacts are provided by H314 and Q326. In terms of domain architecture, CBM20 spans 449–551 (GGEGGLVNVN…AAGASTSGSF (103 aa)).

This sequence belongs to the glycosyl hydrolase 13 family. As to quaternary structure, monomer. Ca(2+) serves as cofactor.

It is found in the secreted. It catalyses the reaction Hydrolysis of (1-&gt;4)-alpha-D-glucosidic linkages in amylaceous polysaccharides, to remove successive maltotetraose residues from the non-reducing chain ends.. It functions in the pathway glycan degradation; starch degradation. This Roseateles saccharophilus (Pseudomonas saccharophila) protein is Glucan 1,4-alpha-maltotetraohydrolase (mta).